A 329-amino-acid chain; its full sequence is Ketol-acid reductoisomerase (NADP(+)) (329 aa).

Positions T2–T182 constitute a KARI N-terminal Rossmann domain. NADP(+) is bound by residues Y25 to Q28, S51, S53, and D83 to Q86. H108 is an active-site residue. G134 lines the NADP(+) pocket. The KARI C-terminal knotted domain occupies N183 to L328. Mg(2+)-binding residues include D191, E195, E227, and E231. S252 contributes to the substrate binding site.

The protein belongs to the ketol-acid reductoisomerase family. Mg(2+) is required as a cofactor.

It catalyses the reaction (2R)-2,3-dihydroxy-3-methylbutanoate + NADP(+) = (2S)-2-acetolactate + NADPH + H(+). It carries out the reaction (2R,3R)-2,3-dihydroxy-3-methylpentanoate + NADP(+) = (S)-2-ethyl-2-hydroxy-3-oxobutanoate + NADPH + H(+). It functions in the pathway amino-acid biosynthesis; L-isoleucine biosynthesis; L-isoleucine from 2-oxobutanoate: step 2/4. It participates in amino-acid biosynthesis; L-valine biosynthesis; L-valine from pyruvate: step 2/4. Involved in the biosynthesis of branched-chain amino acids (BCAA). Catalyzes an alkyl-migration followed by a ketol-acid reduction of (S)-2-acetolactate (S2AL) to yield (R)-2,3-dihydroxy-isovalerate. In the isomerase reaction, S2AL is rearranged via a Mg-dependent methyl migration to produce 3-hydroxy-3-methyl-2-ketobutyrate (HMKB). In the reductase reaction, this 2-ketoacid undergoes a metal-dependent reduction by NADPH to yield (R)-2,3-dihydroxy-isovalerate. This is Ketol-acid reductoisomerase (NADP(+)) from Prochlorococcus marinus (strain MIT 9515).